The sequence spans 636 residues: Threonine--tRNA ligase (636 aa).

The region spanning 1-60 (MPIINFNNKEILFNYPISIIEIIKKFDKNLSENCIAAKINGKLLDVSEIINYDGSLELVK) is the TGS domain. Positions 242-533 (DHRKIGKKLD…ITEEFSGKYP (292 aa)) are catalytic. Zn(2+)-binding residues include Cys333, His384, and His510.

This sequence belongs to the class-II aminoacyl-tRNA synthetase family. In terms of assembly, homodimer. Zn(2+) serves as cofactor.

It is found in the cytoplasm. It carries out the reaction tRNA(Thr) + L-threonine + ATP = L-threonyl-tRNA(Thr) + AMP + diphosphate + H(+). In terms of biological role, catalyzes the attachment of threonine to tRNA(Thr) in a two-step reaction: L-threonine is first activated by ATP to form Thr-AMP and then transferred to the acceptor end of tRNA(Thr). Also edits incorrectly charged L-seryl-tRNA(Thr). This is Threonine--tRNA ligase from Wigglesworthia glossinidia brevipalpis.